Here is a 715-residue protein sequence, read N- to C-terminus: Fatty acid oxidation complex subunit alpha (715 aa).

The interval 1 to 190 (MIYEGKAITV…KVGAVDAVVA (190 aa)) is enoyl-CoA hydratase/isomerase. Position 297 (Asp297) interacts with substrate. A 3-hydroxyacyl-CoA dehydrogenase region spans residues 312–715 (KDVKQAAVLG…MAKNGQSFFG (404 aa)). NAD(+) contacts are provided by residues Met325, Asp344, 401–403 (VVE), Lys408, and Ser430. His451 functions as the For 3-hydroxyacyl-CoA dehydrogenase activity in the catalytic mechanism. Residue Asn454 coordinates NAD(+). Residues Asn501 and Tyr660 each coordinate substrate.

In the N-terminal section; belongs to the enoyl-CoA hydratase/isomerase family. It in the C-terminal section; belongs to the 3-hydroxyacyl-CoA dehydrogenase family. As to quaternary structure, heterotetramer of two alpha chains (FadB) and two beta chains (FadA).

The catalysed reaction is a (3S)-3-hydroxyacyl-CoA + NAD(+) = a 3-oxoacyl-CoA + NADH + H(+). The enzyme catalyses a (3S)-3-hydroxyacyl-CoA = a (2E)-enoyl-CoA + H2O. It catalyses the reaction a 4-saturated-(3S)-3-hydroxyacyl-CoA = a (3E)-enoyl-CoA + H2O. It carries out the reaction (3S)-3-hydroxybutanoyl-CoA = (3R)-3-hydroxybutanoyl-CoA. The catalysed reaction is a (3Z)-enoyl-CoA = a 4-saturated (2E)-enoyl-CoA. The enzyme catalyses a (3E)-enoyl-CoA = a 4-saturated (2E)-enoyl-CoA. Its pathway is lipid metabolism; fatty acid beta-oxidation. Its function is as follows. Involved in the aerobic and anaerobic degradation of long-chain fatty acids via beta-oxidation cycle. Catalyzes the formation of 3-oxoacyl-CoA from enoyl-CoA via L-3-hydroxyacyl-CoA. It can also use D-3-hydroxyacyl-CoA and cis-3-enoyl-CoA as substrate. The sequence is that of Fatty acid oxidation complex subunit alpha from Pseudomonas fluorescens (strain Pf0-1).